The following is a 769-amino-acid chain: Non-secreted LysM effector LysM17 (769 aa).

The chain crosses the membrane as a helical span at residues 173-193 (LPPLATAIPLAVVWASLASVI). Asn-305, Asn-368, Asn-423, and Asn-452 each carry an N-linked (GlcNAc...) asparagine glycan. 2 consecutive LysM domains span residues 498-543 (RTIQ…HVCC) and 562-610 (YSNL…KICL). N-linked (GlcNAc...) asparagine glycosylation is found at Asn-631, Asn-671, Asn-706, and Asn-734.

This sequence belongs to the secreted LysM effector family.

It is found in the membrane. In terms of biological role, non-secreted LysM effector that might be involved in manipulation of host defenses for successful infection. The sequence is that of Non-secreted LysM effector LysM17 from Penicillium expansum (Blue mold rot fungus).